The chain runs to 245 residues: DNA repair protein RecO (245 aa).

The protein belongs to the RecO family.

In terms of biological role, involved in DNA repair and RecF pathway recombination. This is DNA repair protein RecO from Klebsiella pneumoniae (strain 342).